We begin with the raw amino-acid sequence, 639 residues long: 1-deoxy-D-xylulose-5-phosphate synthase (639 aa).

Thiamine diphosphate-binding positions include histidine 79 and 120–122; that span reads GHS. Aspartate 151 contributes to the Mg(2+) binding site. Thiamine diphosphate-binding positions include 152–153, asparagine 180, tyrosine 288, and glutamate 370; that span reads GG. Position 180 (asparagine 180) interacts with Mg(2+).

The protein belongs to the transketolase family. DXPS subfamily. Homodimer. Mg(2+) is required as a cofactor. Thiamine diphosphate serves as cofactor.

It carries out the reaction D-glyceraldehyde 3-phosphate + pyruvate + H(+) = 1-deoxy-D-xylulose 5-phosphate + CO2. Its pathway is metabolic intermediate biosynthesis; 1-deoxy-D-xylulose 5-phosphate biosynthesis; 1-deoxy-D-xylulose 5-phosphate from D-glyceraldehyde 3-phosphate and pyruvate: step 1/1. Functionally, catalyzes the acyloin condensation reaction between C atoms 2 and 3 of pyruvate and glyceraldehyde 3-phosphate to yield 1-deoxy-D-xylulose-5-phosphate (DXP). The polypeptide is 1-deoxy-D-xylulose-5-phosphate synthase (Methylococcus capsulatus (strain ATCC 33009 / NCIMB 11132 / Bath)).